A 72-amino-acid polypeptide reads, in one-letter code: Translation initiation factor IF-1 (72 aa).

An S1-like domain is found at 1–72 (MAKEEVLEFP…TKGRITYRLK (72 aa)).

This sequence belongs to the IF-1 family. In terms of assembly, component of the 30S ribosomal translation pre-initiation complex which assembles on the 30S ribosome in the order IF-2 and IF-3, IF-1 and N-formylmethionyl-tRNA(fMet); mRNA recruitment can occur at any time during PIC assembly.

The protein localises to the cytoplasm. Its function is as follows. One of the essential components for the initiation of protein synthesis. Stabilizes the binding of IF-2 and IF-3 on the 30S subunit to which N-formylmethionyl-tRNA(fMet) subsequently binds. Helps modulate mRNA selection, yielding the 30S pre-initiation complex (PIC). Upon addition of the 50S ribosomal subunit IF-1, IF-2 and IF-3 are released leaving the mature 70S translation initiation complex. The chain is Translation initiation factor IF-1 from Brucella suis biovar 1 (strain 1330).